A 334-amino-acid polypeptide reads, in one-letter code: Glyceraldehyde-3-phosphate dehydrogenase 1 (334 aa).

Residues 12 to 13, aspartate 35, and arginine 79 each bind NAD(+); that span reads RI. Residues 152–154, threonine 183, arginine 198, 211–212, and arginine 234 each bind D-glyceraldehyde 3-phosphate; these read SCT and SG. Cysteine 153 functions as the Nucleophile in the catalytic mechanism. Asparagine 315 contributes to the NAD(+) binding site.

Belongs to the glyceraldehyde-3-phosphate dehydrogenase family. As to quaternary structure, homotetramer.

It localises to the cytoplasm. The enzyme catalyses D-glyceraldehyde 3-phosphate + phosphate + NAD(+) = (2R)-3-phospho-glyceroyl phosphate + NADH + H(+). It participates in carbohydrate degradation; glycolysis; pyruvate from D-glyceraldehyde 3-phosphate: step 1/5. Resistant to pentalenolactone. Catalyzes the oxidative phosphorylation of glyceraldehyde 3-phosphate (G3P) to 1,3-bisphosphoglycerate (BPG) using the cofactor NAD. The first reaction step involves the formation of a hemiacetal intermediate between G3P and a cysteine residue, and this hemiacetal intermediate is then oxidized to a thioester, with concomitant reduction of NAD to NADH. The reduced NADH is then exchanged with the second NAD, and the thioester is attacked by a nucleophilic inorganic phosphate to produce BPG. This chain is Glyceraldehyde-3-phosphate dehydrogenase 1 (gap1), found in Streptomyces avermitilis (strain ATCC 31267 / DSM 46492 / JCM 5070 / NBRC 14893 / NCIMB 12804 / NRRL 8165 / MA-4680).